A 331-amino-acid polypeptide reads, in one-letter code: ADP-L-glycero-D-manno-heptose-6-epimerase (331 aa).

NADP(+) contacts are provided by residues 11–12, 32–33, Lys-39, Lys-54, 75–79, and Asn-92; these read FI, DN, and EGACS. The Proton acceptor role is filled by Tyr-139. Position 143 (Lys-143) interacts with NADP(+). Asn-168 is a binding site for substrate. Positions 169 and 177 each coordinate NADP(+). Lys-177 serves as the catalytic Proton acceptor. Substrate contacts are provided by residues Arg-179, His-186, 200–203, Arg-213, and Tyr-292; that span reads FGEY.

The protein belongs to the NAD(P)-dependent epimerase/dehydratase family. HldD subfamily. Homopentamer. Requires NADP(+) as cofactor.

It catalyses the reaction ADP-D-glycero-beta-D-manno-heptose = ADP-L-glycero-beta-D-manno-heptose. It functions in the pathway nucleotide-sugar biosynthesis; ADP-L-glycero-beta-D-manno-heptose biosynthesis; ADP-L-glycero-beta-D-manno-heptose from D-glycero-beta-D-manno-heptose 7-phosphate: step 4/4. Its function is as follows. Catalyzes the interconversion between ADP-D-glycero-beta-D-manno-heptose and ADP-L-glycero-beta-D-manno-heptose via an epimerization at carbon 6 of the heptose. This Cupriavidus taiwanensis (strain DSM 17343 / BCRC 17206 / CCUG 44338 / CIP 107171 / LMG 19424 / R1) (Ralstonia taiwanensis (strain LMG 19424)) protein is ADP-L-glycero-D-manno-heptose-6-epimerase.